The sequence spans 271 residues: Aquaporin-2 (271 aa).

Topologically, residues 1-11 (MWELRSIAFSR) are cytoplasmic. The helical transmembrane segment at 12–32 (AVFAEFLATLLFVFFGLGSAL) threads the bilayer. The Extracellular portion of the chain corresponds to 33–40 (NWPQALPS). The chain crosses the membrane as a helical span at residues 41-59 (VLQIAMAFGLGIGTLVQAL). Topologically, residues 60–64 (GHISG) are cytoplasmic. The segment at residues 65–74 (AHINPAVTVA) is an intramembrane region (discontinuously helical). The short motif at 68–70 (NPA) is the NPA 1 element. Topologically, residues 75–85 (CLVGCHVSVLR) are cytoplasmic. The helical transmembrane segment at 86–107 (AAFYVAAQLLGAVAGAALLHEI) threads the bilayer. At 108-127 (TPADIRGDLAVNALSNSTTA) the chain is on the extracellular side. Asn123 is a glycosylation site (N-linked (GlcNAc...) asparagine). The helical transmembrane segment at 128-148 (GQAVTVELFLTLQLVLCIFAS) threads the bilayer. The Cytoplasmic segment spans residues 149–156 (TDERRGEN). Residues 157 to 176 (PGTPALSIGFSVALGHLLGI) traverse the membrane as a helical segment. Residues 177–180 (HYTG) lie on the Extracellular side of the membrane. An intramembrane region (discontinuously helical) is located at residues 181-193 (CSMNPARSLAPAV). The NPA 2 signature appears at 184–186 (NPA). Residues 194-201 (VTGKFDDH) lie on the Extracellular side of the membrane. A helical transmembrane segment spans residues 202–222 (WVFWIGPLVGAILGSLLYNYV). Residues 223–271 (LFPPAKSLSERLAVLKGLEPDTDWEEREVRRRQSVELHSPQSLPRGTKA) are Cytoplasmic-facing. A disordered region spans residues 248 to 271 (EREVRRRQSVELHSPQSLPRGTKA). Ser256 is subject to Phosphoserine; by PKA. Polar residues predominate over residues 261–271 (SPQSLPRGTKA).

The protein belongs to the MIP/aquaporin (TC 1.A.8) family. As to quaternary structure, homotetramer. Interacts with micropeptide MIAC; the interaction leads to a reduction of filamentous actin fibers and inhibition of the EREG/EGFR signaling pathway. Ser-256 phosphorylation is necessary and sufficient for expression at the apical membrane. Endocytosis is not phosphorylation-dependent. In terms of processing, N-glycosylated. As to expression, expressed in collecting tubules in kidney medulla (at protein level). Detected in kidney.

Its subcellular location is the apical cell membrane. The protein resides in the basolateral cell membrane. It localises to the cell membrane. It is found in the cytoplasmic vesicle membrane. The protein localises to the golgi apparatus. Its subcellular location is the trans-Golgi network membrane. It carries out the reaction H2O(in) = H2O(out). It catalyses the reaction glycerol(in) = glycerol(out). Functionally, forms a water-specific channel that provides the plasma membranes of renal collecting duct with high permeability to water, thereby permitting water to move in the direction of an osmotic gradient. Plays an essential role in renal water homeostasis. Could also be permeable to glycerol. The protein is Aquaporin-2 of Homo sapiens (Human).